Consider the following 191-residue polypeptide: UPF0312 protein Sputcn32_2702 (191 aa).

The N-terminal stretch at M1–A22 is a signal peptide.

It belongs to the UPF0312 family. Type 1 subfamily.

The protein resides in the periplasm. This chain is UPF0312 protein Sputcn32_2702, found in Shewanella putrefaciens (strain CN-32 / ATCC BAA-453).